We begin with the raw amino-acid sequence, 146 residues long: Basic phospholipase A2 beta-bungarotoxin A2 chain (146 aa).

An N-terminal signal peptide occupies residues 1–19 (MNPAHLLVLSAVCVSLLGA). A propeptide spanning residues 20-27 (SNIPPQSL) is cleaved from the precursor. Cystine bridges form between C54/C145, C56/C72, C71/C126, C78/C119, C87/C112, and C105/C117. Ca(2+) is bound by residues Y55, G57, and G59. H75 is an active-site residue. D76 is a binding site for Ca(2+). The active site involves D120.

Belongs to the phospholipase A2 family. Group I subfamily. D49 sub-subfamily. Heterodimer; disulfide-linked. The A chain has phospholipase A2 activity and the B chain shows homology with the basic protease inhibitors. Requires Ca(2+) as cofactor. Expressed by the venom gland.

Its subcellular location is the secreted. It carries out the reaction a 1,2-diacyl-sn-glycero-3-phosphocholine + H2O = a 1-acyl-sn-glycero-3-phosphocholine + a fatty acid + H(+). In terms of biological role, snake venom phospholipase A2 (PLA2) that inhibits neuromuscular transmission by blocking acetylcholine release from the nerve termini. PLA2 catalyzes the calcium-dependent hydrolysis of the 2-acyl groups in 3-sn-phosphoglycerides. This is Basic phospholipase A2 beta-bungarotoxin A2 chain from Bungarus flaviceps flaviceps (Red-headed krait).